The primary structure comprises 671 residues: DNA ligase (671 aa).

NAD(+) contacts are provided by residues 32–36 (DVEYD), 81–82 (SL), and Glu-113. Lys-115 acts as the N6-AMP-lysine intermediate in catalysis. Arg-136, Glu-173, Lys-290, and Lys-314 together coordinate NAD(+). Zn(2+) contacts are provided by Cys-408, Cys-411, Cys-426, and Cys-432. One can recognise a BRCT domain in the interval 593–671 (EIDSPFAGKT…EAEMLRLLGS (79 aa)).

Belongs to the NAD-dependent DNA ligase family. LigA subfamily. Mg(2+) serves as cofactor. It depends on Mn(2+) as a cofactor.

The enzyme catalyses NAD(+) + (deoxyribonucleotide)n-3'-hydroxyl + 5'-phospho-(deoxyribonucleotide)m = (deoxyribonucleotide)n+m + AMP + beta-nicotinamide D-nucleotide.. DNA ligase that catalyzes the formation of phosphodiester linkages between 5'-phosphoryl and 3'-hydroxyl groups in double-stranded DNA using NAD as a coenzyme and as the energy source for the reaction. It is essential for DNA replication and repair of damaged DNA. This is DNA ligase from Escherichia coli O17:K52:H18 (strain UMN026 / ExPEC).